Reading from the N-terminus, the 379-residue chain is Chaperone protein DnaJ (379 aa).

Positions 5-69 (DYYEVLGISK…NKRATIDQFG (65 aa)) constitute a J domain. The segment at 136-218 (GTTKEISIRK…CHGKGTENKT (83 aa)) adopts a CR-type zinc-finger fold. Residues Cys-149, Cys-152, Cys-166, Cys-169, Cys-192, Cys-195, Cys-206, and Cys-209 each contribute to the Zn(2+) site. CXXCXGXG motif repeat units follow at residues 149 to 156 (CETCHGDG), 166 to 173 (CSYCNGAG), 192 to 199 (CPKCNGSG), and 206 to 213 (CPTCHGKG).

It belongs to the DnaJ family. As to quaternary structure, homodimer. It depends on Zn(2+) as a cofactor.

It is found in the cytoplasm. Its function is as follows. Participates actively in the response to hyperosmotic and heat shock by preventing the aggregation of stress-denatured proteins and by disaggregating proteins, also in an autonomous, DnaK-independent fashion. Unfolded proteins bind initially to DnaJ; upon interaction with the DnaJ-bound protein, DnaK hydrolyzes its bound ATP, resulting in the formation of a stable complex. GrpE releases ADP from DnaK; ATP binding to DnaK triggers the release of the substrate protein, thus completing the reaction cycle. Several rounds of ATP-dependent interactions between DnaJ, DnaK and GrpE are required for fully efficient folding. Also involved, together with DnaK and GrpE, in the DNA replication of plasmids through activation of initiation proteins. The polypeptide is Chaperone protein DnaJ (Staphylococcus aureus).